Here is a 320-residue protein sequence, read N- to C-terminus: Ferrochelatase (320 aa).

Residues His194 and Glu275 each contribute to the Fe cation site.

Belongs to the ferrochelatase family. Monomer.

The protein localises to the cytoplasm. It catalyses the reaction heme b + 2 H(+) = protoporphyrin IX + Fe(2+). It participates in porphyrin-containing compound metabolism; protoheme biosynthesis; protoheme from protoporphyrin-IX: step 1/1. Its function is as follows. Catalyzes the ferrous insertion into protoporphyrin IX. In Salmonella typhi, this protein is Ferrochelatase.